Reading from the N-terminus, the 283-residue chain is Polyamine aminopropyltransferase (283 aa).

The region spanning 5 to 240 (NTWFTEIHQD…GWWTATMACK (236 aa)) is the PABS domain. Glutamine 33 contributes to the S-methyl-5'-thioadenosine binding site. Residues histidine 64 and aspartate 88 each coordinate spermidine. Residues aspartate 108 and 139–140 (DG) each bind S-methyl-5'-thioadenosine. The active-site Proton acceptor is the aspartate 158. 158 to 161 (DSTD) serves as a coordination point for spermidine. Proline 165 contributes to the S-methyl-5'-thioadenosine binding site.

Belongs to the spermidine/spermine synthase family. In terms of assembly, homodimer or homotetramer.

Its subcellular location is the cytoplasm. It catalyses the reaction S-adenosyl 3-(methylsulfanyl)propylamine + putrescine = S-methyl-5'-thioadenosine + spermidine + H(+). It participates in amine and polyamine biosynthesis; spermidine biosynthesis; spermidine from putrescine: step 1/1. Catalyzes the irreversible transfer of a propylamine group from the amino donor S-adenosylmethioninamine (decarboxy-AdoMet) to putrescine (1,4-diaminobutane) to yield spermidine. This is Polyamine aminopropyltransferase from Thioalkalivibrio sulfidiphilus (strain HL-EbGR7).